Here is a 1323-residue protein sequence, read N- to C-terminus: Lysine-specific demethylase 3A (1323 aa).

3 disordered regions span residues 255–287, 307–337, and 385–416; these read TRTG…PSMC, ATPS…PQGC, and SEPK…GLPK. Ser-264 is modified (phosphoserine). 2 stretches are compositionally biased toward polar residues: residues 266-283 and 307-327; these read ENNG…SEAS and ATPS…NSPP. At Ser-325 the chain carries Phosphoserine. Phosphoserine is present on Ser-446. 2 disordered regions span residues 468 to 487 and 495 to 517; these read AEKK…LKET and SCCT…LTDP. Composition is skewed to polar residues over residues 477 to 486 and 495 to 507; these read LGSQSQNLKE and SCCT…TQTP. The segment at 662 to 687 adopts a C6-type zinc-finger fold; it reads CDVCDTTIFNLHWVCPRCGFGVCVDC. The LXXLL motif signature appears at 885 to 889; it reads LRNLL. An N6-acetyllysine modification is found at Lys-895. The 224-residue stretch at 1060–1283 folds into the JmjC domain; the sequence is MPSRFDDLMA…HCFWLTQEFR (224 aa). Residues His-1122, Asp-1124, and His-1251 each coordinate Fe cation.

Belongs to the JHDM2 histone demethylase family. As to quaternary structure, interacts with VRK1. The cofactor is Fe(2+). In terms of tissue distribution, highly expressed in testis (at protein level). Also expressed at high levels in tissues responsive to sympathetic nerve activity such as brown adipose tissue and skeletal muscle.

It is found in the cytoplasm. Its subcellular location is the nucleus. The catalysed reaction is N(6),N(6)-dimethyl-L-lysyl(9)-[histone H3] + 2 2-oxoglutarate + 2 O2 = L-lysyl(9)-[histone H3] + 2 formaldehyde + 2 succinate + 2 CO2. Its function is as follows. Histone demethylase that specifically demethylates 'Lys-9' of histone H3, thereby playing a central role in histone code. Preferentially demethylates mono- and dimethylated H3 'Lys-9' residue, with a preference for dimethylated residue, while it has weak or no activity on trimethylated H3 'Lys-9'. Demethylation of Lys residue generates formaldehyde and succinate. Involved in hormone-dependent transcriptional activation, by participating in recruitment to androgen-receptor target genes, resulting in H3 'Lys-9' demethylation and transcriptional activation. Involved in spermatogenesis by regulating expression of target genes such as PRM1 and TNP1 which are required for packaging and condensation of sperm chromatin. Involved in obesity resistance through regulation of metabolic genes such as PPARA and UCP1. This chain is Lysine-specific demethylase 3A (Kdm3a), found in Mus musculus (Mouse).